A 620-amino-acid chain; its full sequence is Probable potassium transport system protein Kup (620 aa).

Helical transmembrane passes span 7 to 27 (LALAALGVVFGDIGTSPLYAI), 44 to 64 (VFGVLSLLVWSLLLIVSLKYL), 98 to 118 (FFLIAIGLFGAALLYGDGMIT), 135 to 155 (PAFHDLIIPATVTVLVILFLF), 166 to 186 (LFGPVILLWFVVLGVLGLVEI), 201 to 221 (GIMFLLNNQLHGFMVLGAVFL), 245 to 265 (WAFLVLPALLLNYFGQGALLL), 278 to 298 (LVPSWGLIPMVILSTSATIIA), 335 to 355 (IYVPAANWSLMVATISLVIGF), 361 to 381 (LAAAYGVAVTATMLISTILFY), 394 to 414 (VLNVMIVVFLLVDLAFFGASA), and 417 to 437 (LFHGAWFPLVIAAVMFTVMMT).

The protein belongs to the HAK/KUP transporter (TC 2.A.72) family.

The protein localises to the cell inner membrane. The catalysed reaction is K(+)(in) + H(+)(in) = K(+)(out) + H(+)(out). In terms of biological role, transport of potassium into the cell. Likely operates as a K(+):H(+) symporter. This is Probable potassium transport system protein Kup from Chlorobium chlorochromatii (strain CaD3).